The following is a 159-amino-acid chain: Nascent polypeptide-associated complex subunit beta (159 aa).

Disordered regions lie at residues 1–39 and 121–159; these read MDMEKLKRMQARGGVRTGDGKGTPRRKVKNVHKSTGMDD and ESYQSMQKAEGGEDKKDDDEDDDDIPDLVEGENFEDKVE. The segment covering 23 to 32 has biased composition (basic residues); the sequence is TPRRKVKNVH. An NAC-A/B domain is found at 36 to 101; sequence GMDDKKLQTS…GEDKELTELV (66 aa). Positions 136 to 153 are enriched in acidic residues; the sequence is KDDDEDDDDIPDLVEGEN.

Belongs to the NAC-beta family. In terms of assembly, part of the nascent polypeptide-associated complex (NAC), consisting of EGD2 and EGD1. NAC associates with ribosomes via EGD1.

The protein localises to the cytoplasm. It localises to the nucleus. Component of the nascent polypeptide-associated complex (NAC), a dynamic component of the ribosomal exit tunnel, protecting the emerging polypeptides from interaction with other cytoplasmic proteins to ensure appropriate nascent protein targeting. The NAC complex also promotes mitochondrial protein import by enhancing productive ribosome interactions with the outer mitochondrial membrane and blocks the inappropriate interaction of ribosomes translating non-secretory nascent polypeptides with translocation sites in the membrane of the endoplasmic reticulum. EGD1 may act as a transcription factor that exert a negative effect on the expression of several genes that are transcribed by RNA polymerase II. This chain is Nascent polypeptide-associated complex subunit beta (egd1), found in Botryotinia fuckeliana (strain B05.10) (Noble rot fungus).